A 207-amino-acid polypeptide reads, in one-letter code: High frequency lysogenization protein HflD homolog (207 aa).

The protein belongs to the HflD family.

The protein localises to the cytoplasm. Its subcellular location is the cell inner membrane. This Methylococcus capsulatus (strain ATCC 33009 / NCIMB 11132 / Bath) protein is High frequency lysogenization protein HflD homolog.